We begin with the raw amino-acid sequence, 117 residues long: MDWTWRFLFVVAAATGVQSQVQLVQSGAEVKKPGSSVKVSCKASGGTFSSYAISWVRQAPGQGLEWMGGIIPIFGTANYAQKFQGRVTITADKSTSTAYMELSSLRSEDTAVYYCAR.

Residues 1–19 form the signal peptide; it reads MDWTWRFLFVVAAATGVQS. Q20 is modified (pyrrolidone carboxylic acid). The framework-1 stretch occupies residues 20–44; that stretch reads QVQLVQSGAEVKKPGSSVKVSCKAS. The Ig-like domain occupies 20–117; it reads QVQLVQSGAE…EDTAVYYCAR (98 aa). A disulfide bridge links C41 with C115. Residues 45–52 form a complementarity-determining-1 region; the sequence is GGTFSSYA. The framework-2 stretch occupies residues 53-69; the sequence is ISWVRQAPGQGLEWMGG. The tract at residues 70–77 is complementarity-determining-2; the sequence is IIPIFGTA. Residues 78–115 form a framework-3 region; that stretch reads NYAQKFQGRVTITADKSTSTAYMELSSLRSEDTAVYYC. The tract at residues 116 to 117 is complementarity-determining-3; it reads AR.

In terms of assembly, immunoglobulins are composed of two identical heavy chains and two identical light chains; disulfide-linked.

Its subcellular location is the secreted. The protein localises to the cell membrane. V region of the variable domain of immunoglobulin heavy chains that participates in the antigen recognition. Immunoglobulins, also known as antibodies, are membrane-bound or secreted glycoproteins produced by B lymphocytes. In the recognition phase of humoral immunity, the membrane-bound immunoglobulins serve as receptors which, upon binding of a specific antigen, trigger the clonal expansion and differentiation of B lymphocytes into immunoglobulins-secreting plasma cells. Secreted immunoglobulins mediate the effector phase of humoral immunity, which results in the elimination of bound antigens. The antigen binding site is formed by the variable domain of one heavy chain, together with that of its associated light chain. Thus, each immunoglobulin has two antigen binding sites with remarkable affinity for a particular antigen. The variable domains are assembled by a process called V-(D)-J rearrangement and can then be subjected to somatic hypermutations which, after exposure to antigen and selection, allow affinity maturation for a particular antigen. The protein is Immunoglobulin heavy variable 1-69 of Homo sapiens (Human).